Consider the following 381-residue polypeptide: tRNA pseudouridine synthase D (381 aa).

Residue Asp-81 is the Nucleophile of the active site. A TRUD domain is found at 160–335; it reads GMPNYFGPQR…TLGSRRFFWV (176 aa).

Belongs to the pseudouridine synthase TruD family.

It carries out the reaction uridine(13) in tRNA = pseudouridine(13) in tRNA. Functionally, responsible for synthesis of pseudouridine from uracil-13 in transfer RNAs. This chain is tRNA pseudouridine synthase D, found in Helicobacter pylori (strain Shi470).